The following is a 490-amino-acid chain: ATP synthase subunit beta, chloroplastic (490 aa).

170–177 (GGAGVGKT) provides a ligand contact to ATP.

This sequence belongs to the ATPase alpha/beta chains family. In terms of assembly, F-type ATPases have 2 components, CF(1) - the catalytic core - and CF(0) - the membrane proton channel. CF(1) has five subunits: alpha(3), beta(3), gamma(1), delta(1), epsilon(1). CF(0) has four main subunits: a(1), b(1), b'(1) and c(9-12).

The protein localises to the plastid. It localises to the chloroplast thylakoid membrane. The catalysed reaction is ATP + H2O + 4 H(+)(in) = ADP + phosphate + 5 H(+)(out). Produces ATP from ADP in the presence of a proton gradient across the membrane. The catalytic sites are hosted primarily by the beta subunits. In Ipomoea obscura (Obscure morning glory), this protein is ATP synthase subunit beta, chloroplastic.